The chain runs to 295 residues: Ethanolamine ammonia-lyase small subunit (295 aa).

Residues valine 207, glutamate 228, and cysteine 258 each contribute to the adenosylcob(III)alamin site.

The protein belongs to the EutC family. As to quaternary structure, the basic unit is a heterodimer which dimerizes to form tetramers. The heterotetramers trimerize; 6 large subunits form a core ring with 6 small subunits projecting outwards. Adenosylcob(III)alamin is required as a cofactor.

Its subcellular location is the bacterial microcompartment. It carries out the reaction ethanolamine = acetaldehyde + NH4(+). It functions in the pathway amine and polyamine degradation; ethanolamine degradation. Functionally, catalyzes the deamination of various vicinal amino-alcohols to oxo compounds. Allows this organism to utilize ethanolamine as the sole source of nitrogen and carbon in the presence of external vitamin B12. In Escherichia coli (strain SE11), this protein is Ethanolamine ammonia-lyase small subunit.